A 946-amino-acid chain; its full sequence is Inter-alpha-trypsin inhibitor heavy chain H2 (946 aa).

Residues 1-18 form the signal peptide; the sequence is MQRPVCLLIWLFLLEAQA. Residues 19–54 constitute a propeptide that is removed on maturation; that stretch reads FEIPINGNSEFAEYSDLVELAPDKLPFVQENGRHQR. In terms of domain architecture, VIT spans 56-185; sequence LPEESGEETD…KVQFELHYQE (130 aa). At S60 the chain carries Phosphoserine. 2 N-linked (GlcNAc...) asparagine glycosylation sites follow: N118 and N263. Residues E282 and E283 each carry the 4-carboxyglutamate modification. Residues 308–468 enclose the VWFA domain; sequence PKNILFVIDV…YDFLKRLSNE (161 aa). The N-linked (GlcNAc...) asparagine glycan is linked to N445. Position 466 is a phosphoserine (S466). D702 bears the Aspartate 1-(chondroitin 4-sulfate)-ester mark. Positions 703 to 946 are excised as a propeptide; sequence PHFIIYLPKS…PQLYSFLKRP (244 aa). S886 carries the phosphoserine modification.

The protein belongs to the ITIH family. In terms of assembly, I-alpha-I plasma protease inhibitors are assembled from one or two heavy chains (HC) and one light chain, bikunin. Inter-alpha-inhibitor (I-alpha-I) is composed of ITIH1/HC1, ITIH2/HC2 and bikunin. Post-translationally, heavy chains are linked to bikunin via chondroitin 4-sulfate esterified to the alpha-carboxyl of the C-terminal aspartate after propeptide cleavage. Phosphorylated by FAM20C in the extracellular medium. Expressed in both liver and brain.

The protein localises to the secreted. Functionally, may act as a carrier of hyaluronan in serum or as a binding protein between hyaluronan and other matrix protein, including those on cell surfaces in tissues to regulate the localization, synthesis and degradation of hyaluronan which are essential to cells undergoing biological processes. The protein is Inter-alpha-trypsin inhibitor heavy chain H2 (Itih2) of Mus musculus (Mouse).